The following is a 320-amino-acid chain: tRNA (guanosine(34)-2'-O)-methyltransferase (320 aa).

S-adenosyl-L-methionine is bound by residues Gly-53, Trp-55, Asp-81, Asp-97, and Asp-122. Catalysis depends on Lys-162, which acts as the Proton acceptor.

Belongs to the class I-like SAM-binding methyltransferase superfamily. RNA methyltransferase RlmE family. TRM7 subfamily. As to quaternary structure, interacts with CG33172/WDR6.

The protein resides in the cytoplasm. The catalysed reaction is cytidine(32)/guanosine(34) in tRNA + 2 S-adenosyl-L-methionine = 2'-O-methylcytidine(32)/2'-O-methylguanosine(34) in tRNA + 2 S-adenosyl-L-homocysteine + 2 H(+). Its function is as follows. Methylates the 2'-O-ribose of nucleotides at position 34 of the tRNA anticodon loop of substrate tRNAs. May require WDR6 for methylation of the nucleotide at position 34 of the anticodon loop of substrate tRNAs. Plays a role in neurogenesis. Requisite for RNA-mediated gene silencing. Modifies position 34 in tRNA(Leu(CAA)), tRNA(Leu(CAG)), tRNA(Phe(GAA)), and tRNA(Trp(CCA)). This Drosophila melanogaster (Fruit fly) protein is tRNA (guanosine(34)-2'-O)-methyltransferase.